The primary structure comprises 576 residues: Sulfite reductase [NADPH] hemoprotein beta-component (576 aa).

A compositionally biased stretch (basic and acidic residues) spans 1–12 (MNVKTEPDRSRD). Residues 1–25 (MNVKTEPDRSRDVSQPLDKLGPDET) are disordered. 4 residues coordinate [4Fe-4S] cluster: Cys-441, Cys-447, Cys-486, and Cys-490. Cys-490 contacts siroheme.

This sequence belongs to the nitrite and sulfite reductase 4Fe-4S domain family. In terms of assembly, alpha(8)-beta(8). The alpha component is a flavoprotein, the beta component is a hemoprotein. Requires siroheme as cofactor. It depends on [4Fe-4S] cluster as a cofactor.

The catalysed reaction is hydrogen sulfide + 3 NADP(+) + 3 H2O = sulfite + 3 NADPH + 4 H(+). Its pathway is sulfur metabolism; hydrogen sulfide biosynthesis; hydrogen sulfide from sulfite (NADPH route): step 1/1. Its function is as follows. Component of the sulfite reductase complex that catalyzes the 6-electron reduction of sulfite to sulfide. This is one of several activities required for the biosynthesis of L-cysteine from sulfate. In Nitrobacter hamburgensis (strain DSM 10229 / NCIMB 13809 / X14), this protein is Sulfite reductase [NADPH] hemoprotein beta-component.